Here is a 650-residue protein sequence, read N- to C-terminus: Histone-lysine N-methyltransferase family member SUVH9 (650 aa).

Disordered regions lie at residues 1-24 (MGSS…KLEP) and 95-129 (PVEE…RSSE). Over residues 7 to 20 (PLDPSLNPSPSLIP) the composition is skewed to low complexity. The segment covering 107–118 (YSTSDSSPSVAT) has biased composition (polar residues). The YDG domain occupies 205–352 (GSIPGVQVGD…FGVFKYRLER (148 aa)). Residues 432–490 (SGCDCVNGCGSGCLCEAKNSGEIAYDYNGTLIRQKPLIHECGSACQCPPSCRNRVTQKG) form the Pre-SET domain. Zn(2+) is bound by residues C434, C436, C440, C444, C446, C472, C476, C478, and C482. In terms of domain architecture, SET spans 493-637 (NRLEVFRSLE…PMTELSLDYG (145 aa)).

It belongs to the class V-like SAM-binding methyltransferase superfamily. Histone-lysine methyltransferase family. Suvar3-9 subfamily. Component of an RNA-directed DNA methylation (RdDM) complex that contains at least MORC6, MORC1/CRT1, MORC2, SWI3D and SUVH9. Interacts directly with MORC6, MORC2 and MORC1/CRT1. Interacts with SWI3B, SWI3C and SWI3D.

Its subcellular location is the nucleus. It is found in the chromosome. The protein localises to the centromere. In terms of biological role, histone methyltransferase family member that plays a role in gene silencing. Together with MORC6 and SUVH2, regulates the silencing of some transposable elements (TEs). According to PubMed:19043555, the protein does not bind S-adenosyl-L-methionine and lacks methyltransferase activity. Instead, it may function downstream of DRM2 in RNA-directed DNA methylation, binding to methylated DNA and recruiting DNA-directed RNA polymerase V to chromatin. In Arabidopsis thaliana (Mouse-ear cress), this protein is Histone-lysine N-methyltransferase family member SUVH9 (SUVH9).